Reading from the N-terminus, the 226-residue chain is Staphylococcal superantigen-like 1 (226 aa).

An N-terminal signal peptide occupies residues 1–30 (MKFKAIAKASLALGMLATGVITSNVQSVQA).

The protein belongs to the staphylococcal/streptococcal toxin family. Homodimer.

Its subcellular location is the secreted. Functionally, mediates virulence by proteolytically cleaving host proteins, including collagens types I and IV as well as human cytokines IL8, IL17A, and IFN-gamma. This is Staphylococcal superantigen-like 1 from Staphylococcus aureus (strain NCTC 8325 / PS 47).